An 837-amino-acid chain; its full sequence is Protein translocase subunit SecA 1 (837 aa).

Residues Gln85, 103–107, and Asp492 each bind ATP; that span reads GEGKT. The tract at residues 791–837 is disordered; it reads KGEAINPAEGKPEAKRQPIRKDQHIGRNDPCPCGSGKKYKNCHGKEA. Residues 800 to 817 are compositionally biased toward basic and acidic residues; the sequence is GKPEAKRQPIRKDQHIGR. Positions 821, 823, 832, and 833 each coordinate Zn(2+). A compositionally biased stretch (basic residues) spans 827 to 837; the sequence is KKYKNCHGKEA.

It belongs to the SecA family. Monomer and homodimer. Part of the essential Sec protein translocation apparatus which comprises SecA, SecYEG and auxiliary proteins SecDF. Other proteins may also be involved. It depends on Zn(2+) as a cofactor.

It localises to the cell membrane. The protein localises to the cytoplasm. The catalysed reaction is ATP + H2O + cellular proteinSide 1 = ADP + phosphate + cellular proteinSide 2.. Part of the Sec protein translocase complex. Interacts with the SecYEG preprotein conducting channel. Has a central role in coupling the hydrolysis of ATP to the transfer of proteins into and across the cell membrane, serving as an ATP-driven molecular motor driving the stepwise translocation of polypeptide chains across the membrane. The chain is Protein translocase subunit SecA 1 from Listeria monocytogenes serovar 1/2a (strain ATCC BAA-679 / EGD-e).